The sequence spans 81 residues: ATP synthase subunit c (81 aa).

Transmembrane regions (helical) follow at residues 7–27 and 55–75; these read LVAI…AIGF and IAGL…FFIF.

This sequence belongs to the ATPase C chain family. In terms of assembly, F-type ATPases have 2 components, F(1) - the catalytic core - and F(0) - the membrane proton channel. F(1) has five subunits: alpha(3), beta(3), gamma(1), delta(1), epsilon(1). F(0) has three main subunits: a(1), b(2) and c(10-14). The alpha and beta chains form an alternating ring which encloses part of the gamma chain. F(1) is attached to F(0) by a central stalk formed by the gamma and epsilon chains, while a peripheral stalk is formed by the delta and b chains.

It localises to the cell inner membrane. F(1)F(0) ATP synthase produces ATP from ADP in the presence of a proton or sodium gradient. F-type ATPases consist of two structural domains, F(1) containing the extramembraneous catalytic core and F(0) containing the membrane proton channel, linked together by a central stalk and a peripheral stalk. During catalysis, ATP synthesis in the catalytic domain of F(1) is coupled via a rotary mechanism of the central stalk subunits to proton translocation. Its function is as follows. Key component of the F(0) channel; it plays a direct role in translocation across the membrane. A homomeric c-ring of between 10-14 subunits forms the central stalk rotor element with the F(1) delta and epsilon subunits. The chain is ATP synthase subunit c from Acinetobacter baumannii (strain ACICU).